Reading from the N-terminus, the 48-residue chain is Small, acid-soluble spore protein O (48 aa).

A disordered region spans residues 1-23; it reads MTKRKANHVINGMNAAKSQGNGA.

It belongs to the SspO family.

Its subcellular location is the spore core. The protein is Small, acid-soluble spore protein O of Bacillus pumilus (strain SAFR-032).